A 474-amino-acid chain; its full sequence is Glutamate--tRNA ligase (474 aa).

The 'HIGH' region signature appears at 9 to 19; that stretch reads PSPTGLLHMGG. Residues 238–242 carry the 'KMSKS' region motif; that stretch reads KLSKR. Lys-241 lines the ATP pocket.

The protein belongs to the class-I aminoacyl-tRNA synthetase family. Glutamate--tRNA ligase type 1 subfamily. Monomer.

Its subcellular location is the cytoplasm. It catalyses the reaction tRNA(Glu) + L-glutamate + ATP = L-glutamyl-tRNA(Glu) + AMP + diphosphate. In terms of biological role, catalyzes the attachment of glutamate to tRNA(Glu) in a two-step reaction: glutamate is first activated by ATP to form Glu-AMP and then transferred to the acceptor end of tRNA(Glu). This chain is Glutamate--tRNA ligase, found in Buchnera aphidicola subsp. Cinara cedri (strain Cc).